Consider the following 131-residue polypeptide: Transcription antitermination protein NusB (131 aa).

The protein belongs to the NusB family.

Involved in transcription antitermination. Required for transcription of ribosomal RNA (rRNA) genes. Binds specifically to the boxA antiterminator sequence of the ribosomal RNA (rrn) operons. The protein is Transcription antitermination protein NusB of Agathobacter rectalis (strain ATCC 33656 / DSM 3377 / JCM 17463 / KCTC 5835 / VPI 0990) (Eubacterium rectale).